Here is an 884-residue protein sequence, read N- to C-terminus: Coatomer subunit gamma-1 (884 aa).

HEAT repeat units lie at residues 65 to 100, 101 to 138, 286 to 323, 325 to 357, and 358 to 395; these read VEATEVFFAVTKLFQSKDAGLRRLVYLMIKELSPSS, DEVIIVTSSLMKDMNSKTDMYRANAIRVLCRIIDGTLL, RELAPAITVLQLFLSSSKPVLRFAAVRTLNKVAMTRPL, VTNCNVDLESLMSDQNRSIATLAITTLLKTGNE, and SSVDRLMKQITNFMSDIADEFKIVVVEAIRSLCLKFPL. Positions 592–612 are disordered; that stretch reads QPLQEKKAPGKKPPAGAPAPA. Positions 602–612 are enriched in pro residues; sequence KKPPAGAPAPA.

Belongs to the COPG family. As to quaternary structure, oligomeric complex that consists of at least the alpha, beta, beta', gamma, delta, epsilon and zeta subunits.

Its subcellular location is the cytoplasm. It is found in the golgi apparatus membrane. The protein localises to the cytoplasmic vesicle. The protein resides in the COPI-coated vesicle membrane. In terms of biological role, the coatomer is a cytosolic protein complex that binds to dilysine motifs and reversibly associates with Golgi non-clathrin-coated vesicles, which further mediate biosynthetic protein transport from the ER, via the Golgi up to the trans Golgi network. Coatomer complex is required for budding from Golgi membranes, and is essential for the retrograde Golgi-to-ER transport of dilysine-tagged proteins. The sequence is that of Coatomer subunit gamma-1 from Oryza sativa subsp. japonica (Rice).